We begin with the raw amino-acid sequence, 347 residues long: Isopentenyl-diphosphate delta-isomerase (347 aa).

A substrate-binding site is contributed by 11 to 12 (RK). FMN is bound by residues 72–74 (AMT), serine 102, and asparagine 131. Glutamine 161 contributes to the substrate binding site. Residue glutamate 162 participates in Mg(2+) binding. Residues lysine 192, threonine 222, and 287 to 288 (AG) each bind FMN.

The protein belongs to the IPP isomerase type 2 family. In terms of assembly, homooctamer. Dimer of tetramers. Requires FMN as cofactor. NADPH is required as a cofactor. The cofactor is Mg(2+).

The protein localises to the cytoplasm. It carries out the reaction isopentenyl diphosphate = dimethylallyl diphosphate. Its function is as follows. Involved in the biosynthesis of isoprenoids. Catalyzes the 1,3-allylic rearrangement of the homoallylic substrate isopentenyl (IPP) to its allylic isomer, dimethylallyl diphosphate (DMAPP). The polypeptide is Isopentenyl-diphosphate delta-isomerase (Lactococcus lactis subsp. lactis (strain IL1403) (Streptococcus lactis)).